A 278-amino-acid polypeptide reads, in one-letter code: Large ribosomal subunit protein uL2 (278 aa).

The segment at 224–262 is disordered; that stretch reads VMNPVDHPLGGGEGRTSGGRHPVTPWGKPTKGFKTRKTR.

It belongs to the universal ribosomal protein uL2 family. As to quaternary structure, part of the 50S ribosomal subunit. Forms a bridge to the 30S subunit in the 70S ribosome.

One of the primary rRNA binding proteins. Required for association of the 30S and 50S subunits to form the 70S ribosome, for tRNA binding and peptide bond formation. It has been suggested to have peptidyltransferase activity; this is somewhat controversial. Makes several contacts with the 16S rRNA in the 70S ribosome. This is Large ribosomal subunit protein uL2 from Leptospira biflexa serovar Patoc (strain Patoc 1 / Ames).